Consider the following 543-residue polypeptide: Chaperonin GroEL (543 aa).

ATP-binding positions include 29–32 (TLGP), 86–90 (DGTTT), G413, 477–479 (DAL), and D493.

This sequence belongs to the chaperonin (HSP60) family. As to quaternary structure, forms a cylinder of 14 subunits composed of two heptameric rings stacked back-to-back. Interacts with the co-chaperonin GroES.

Its subcellular location is the cytoplasm. The enzyme catalyses ATP + H2O + a folded polypeptide = ADP + phosphate + an unfolded polypeptide.. Together with its co-chaperonin GroES, plays an essential role in assisting protein folding. The GroEL-GroES system forms a nano-cage that allows encapsulation of the non-native substrate proteins and provides a physical environment optimized to promote and accelerate protein folding. This chain is Chaperonin GroEL, found in Clostridium botulinum.